Here is a 469-residue protein sequence, read N- to C-terminus: Neuraminidase (469 aa).

Over 1 to 6 the chain is Intravirion; it reads MNPNQK. The helical transmembrane segment at 7 to 27 threads the bilayer; that stretch reads IITIGSICMVIGIVSLMLQIG. The segment at 11-33 is involved in apical transport and lipid raft association; the sequence is GSICMVIGIVSLMLQIGNIISIW. At 28–469 the chain is on the virion surface side; it reads NIISIWVSHS…GAELPFTIDK (442 aa). Positions 36 to 90 are hypervariable stalk region; sequence HSIQTGNQHQAEPCNQSIITYENNTWVNQTYVNISNTNFLTEKAVASVTLAGNSS. N-linked (GlcNAc...) asparagine; by host glycosylation is found at Asn-50, Asn-58, Asn-63, Asn-68, and Asn-88. The head of neuraminidase stretch occupies residues 91–469; it reads LCPISGWAVY…GAELPFTIDK (379 aa). 8 disulfide bridges follow: Cys-92-Cys-417, Cys-124-Cys-129, Cys-184-Cys-231, Cys-233-Cys-238, Cys-279-Cys-292, Cys-281-Cys-290, Cys-318-Cys-335, and Cys-421-Cys-446. Arg-118 provides a ligand contact to substrate. A glycan (N-linked (GlcNAc...) asparagine; by host) is linked at Asn-146. Residue Asp-151 is the Proton donor/acceptor of the active site. A substrate-binding site is contributed by Arg-152. A glycan (N-linked (GlcNAc...) asparagine; by host) is linked at Asn-235. Position 277–278 (277–278) interacts with substrate; that stretch reads EE. Arg-293 serves as a coordination point for substrate. Asp-294, Gly-298, and Asp-324 together coordinate Ca(2+). Arg-368 provides a ligand contact to substrate. An N-linked (GlcNAc...) asparagine; by host glycan is attached at Asn-386. Tyr-402 acts as the Nucleophile in catalysis.

Belongs to the glycosyl hydrolase 34 family. Homotetramer. Requires Ca(2+) as cofactor. Post-translationally, N-glycosylated.

The protein resides in the virion membrane. It is found in the host apical cell membrane. The catalysed reaction is Hydrolysis of alpha-(2-&gt;3)-, alpha-(2-&gt;6)-, alpha-(2-&gt;8)- glycosidic linkages of terminal sialic acid residues in oligosaccharides, glycoproteins, glycolipids, colominic acid and synthetic substrates.. Its activity is regulated as follows. Inhibited by the neuraminidase inhibitors zanamivir (Relenza) and oseltamivir (Tamiflu). These drugs interfere with the release of progeny virus from infected cells and are effective against all influenza strains. Resistance to neuraminidase inhibitors is quite rare. Functionally, catalyzes the removal of terminal sialic acid residues from viral and cellular glycoconjugates. Cleaves off the terminal sialic acids on the glycosylated HA during virus budding to facilitate virus release. Additionally helps virus spread through the circulation by further removing sialic acids from the cell surface. These cleavages prevent self-aggregation and ensure the efficient spread of the progeny virus from cell to cell. Otherwise, infection would be limited to one round of replication. Described as a receptor-destroying enzyme because it cleaves a terminal sialic acid from the cellular receptors. May facilitate viral invasion of the upper airways by cleaving the sialic acid moieties on the mucin of the airway epithelial cells. Likely to plays a role in the budding process through its association with lipid rafts during intracellular transport. May additionally display a raft-association independent effect on budding. Plays a role in the determination of host range restriction on replication and virulence. Sialidase activity in late endosome/lysosome traffic seems to enhance virus replication. In Aves (Cat), this protein is Neuraminidase.